A 504-amino-acid polypeptide reads, in one-letter code: Dimethylsulfoniopropionate lyase 5 (504 aa).

The protein belongs to the aspartate/glutamate racemases family. ALMA1 subfamily. In terms of assembly, homotetramer.

It catalyses the reaction S,S-dimethyl-beta-propiothetin = acrylate + dimethyl sulfide + H(+). Its function is as follows. Mediates cleavage of dimethylsulfoniopropionate (DMSP) into dimethyl sulfide (DMS) and acrylate. DMS is the principal form by which sulfur is transported from oceans to the atmosphere and is a key component of the ocean sulfur cycle. This is Dimethylsulfoniopropionate lyase 5 from Emiliania huxleyi (strain CCMP1516).